Here is a 207-residue protein sequence, read N- to C-terminus: Outer-membrane lipoprotein carrier protein (207 aa).

The signal sequence occupies residues 1–22 (MKLSEKFCVFLFFLLFTSTTHA).

The protein belongs to the LolA family. In terms of assembly, monomer.

Its subcellular location is the periplasm. In terms of biological role, participates in the translocation of lipoproteins from the inner membrane to the outer membrane. Only forms a complex with a lipoprotein if the residue after the N-terminal Cys is not an aspartate (The Asp acts as a targeting signal to indicate that the lipoprotein should stay in the inner membrane). This is Outer-membrane lipoprotein carrier protein from Nitrosospira multiformis (strain ATCC 25196 / NCIMB 11849 / C 71).